The sequence spans 600 residues: DNA mismatch repair protein MutL (600 aa).

The interval 327 to 405 is disordered; the sequence is DGSRAATTGA…FSPQPAAAEP (79 aa). The span at 349-367 shows a compositional bias: polar residues; the sequence is PNSQRPQTAWSAETSSSRP.

The protein belongs to the DNA mismatch repair MutL/HexB family.

Functionally, this protein is involved in the repair of mismatches in DNA. It is required for dam-dependent methyl-directed DNA mismatch repair. May act as a 'molecular matchmaker', a protein that promotes the formation of a stable complex between two or more DNA-binding proteins in an ATP-dependent manner without itself being part of a final effector complex. This is DNA mismatch repair protein MutL from Rhizobium johnstonii (strain DSM 114642 / LMG 32736 / 3841) (Rhizobium leguminosarum bv. viciae).